We begin with the raw amino-acid sequence, 391 residues long: Argininosuccinate synthase (391 aa).

A6–T14 contacts ATP. Y84 is a binding site for L-citrulline. G114 contributes to the ATP binding site. L-aspartate contacts are provided by T116, N120, and D121. Residue N120 coordinates L-citrulline. Residues R124, S171, S180, E253, and Y265 each coordinate L-citrulline.

The protein belongs to the argininosuccinate synthase family. Type 1 subfamily. Homotetramer.

The protein localises to the cytoplasm. It catalyses the reaction L-citrulline + L-aspartate + ATP = 2-(N(omega)-L-arginino)succinate + AMP + diphosphate + H(+). It functions in the pathway amino-acid biosynthesis; L-arginine biosynthesis; L-arginine from L-ornithine and carbamoyl phosphate: step 2/3. This is Argininosuccinate synthase from Metallosphaera sedula (strain ATCC 51363 / DSM 5348 / JCM 9185 / NBRC 15509 / TH2).